We begin with the raw amino-acid sequence, 739 residues long: Homeobox protein SIX5 (739 aa).

Low complexity-rich tracts occupy residues 1-24, 34-61, and 74-83; these read MATL…AAAA, QLLQ…AAGA, and PEAASEPPTG. Disordered regions lie at residues 1–84, 251–294, 361–381, and 617–650; these read MATL…PTGL, NRRQ…AAPV, LTGG…SETK, and LSAQ…FPAP. Residues 201–260 constitute a DNA-binding region (homeobox); sequence GEETVYCFKERSRAALKACYRGNRYPTPDEKRRLATLTGLSLTQVSNWFKNRRQRDRTGA. Over residues 279–289 the composition is skewed to basic and acidic residues; the sequence is ESSRSPEDLER. Positions 617 to 646 are enriched in low complexity; that stretch reads LSAQQPPPAAATTSSTSLPFSPDSPGLLPN.

This sequence belongs to the SIX/Sine oculis homeobox family. In terms of assembly, probably binds DNA dimer. Interacts with EYA3, and probably EYA1 and EYA2. Expressed in adult but not in fetal eyes. Found in corneal epithelium and endothelium, lens epithelium, ciliary body epithelia, cellular layers of the retina and the sclera.

Its subcellular location is the cytoplasm. The protein localises to the nucleus. In terms of biological role, transcription factor that is thought to be involved in regulation of organogenesis. May be involved in determination and maintenance of retina formation. Binds a 5'-GGTGTCAG-3' motif present in the ARE regulatory element of ATP1A1. Binds a 5'-TCA[AG][AG]TTNC-3' motif present in the MEF3 element in the myogenin promoter, and in the IGFBP5 promoter. Thought to be regulated by association with Dach and Eya proteins, and seems to be coactivated by EYA1, EYA2 and EYA3. The polypeptide is Homeobox protein SIX5 (SIX5) (Homo sapiens (Human)).